A 148-amino-acid polypeptide reads, in one-letter code: uncharacterized protein (148 aa).

A helical transmembrane segment spans residues 22–40 (YFLSLTVVISIIHLFTTCV). The interval 43 to 141 (HNHSTHFPYL…YYPISRHYLH (99 aa)) is histidine-rich.

Its subcellular location is the host membrane. This is an uncharacterized protein from African swine fever virus (strain Badajoz 1971 Vero-adapted) (Ba71V).